The sequence spans 528 residues: 4-chlorobenzoate--CoA ligase (528 aa).

Residues 161-169 (TSGTTGLPK), 300-305 (NIYGTT), and N409 each bind ATP.

The protein belongs to the ATP-dependent AMP-binding enzyme family. In terms of assembly, homodimer. Mg(2+) is required as a cofactor.

It catalyses the reaction 4-chlorobenzoate + ATP + CoA = 4-chlorobenzoyl-CoA + AMP + diphosphate. Its pathway is xenobiotic degradation; 4-chlorobenzoate degradation; 4-hydroxybenzoate from 4-chlorobenzoate: step 2/3. Its activity is regulated as follows. Unaffected by 5,5'-dithiobis-(2-nitrobenzoic acid), 4-chloromercuribenzoate and sodium azide. Inhibited by Cu(2+), Fe(2+) and Zn(2+). Unaffected by Na(+), K(+) and Li(+). In terms of biological role, catalyzes the formation of chlorobenzoyl-CoA via a 2 step reaction. First 4-chlorobenzoyl is adenylated by ATP, followed by acyl transfer from the 4-chlorobenzoyl-AMP intermediate to CoA. Benzoate, 4-bromobenzoate, 4-iodobenzoate and 4-methylbenzoate also act as substrates. Inactive towards 4-aminobenzoate, 4-hydroxybenzoate, 2-aminobenzoate, 2,3-dihydroxybenzoate, 4-coumarate and the aliphatic carboxylic acids palmate, caproate, laurate and butyrate. Negligible activity is detected when ATP is replaced by UTP, CTP or GTP as cosubstrate. The protein is 4-chlorobenzoate--CoA ligase of Pseudomonas sp. (strain CBS-3).